The chain runs to 530 residues: Probable ATP-binding protein YbiT (530 aa).

ABC transporter domains are found at residues 2-252 and 320-526; these read LVSS…ERLL and LEVE…YLRS. Residues 34 to 41 and 352 to 359 contribute to the ATP site; these read GANGSGKS and GTNGVGKS.

The protein belongs to the ABC transporter superfamily. ABCF family. YbiT subfamily.

The protein is Probable ATP-binding protein YbiT (ybiT) of Escherichia coli O157:H7.